Consider the following 931-residue polypeptide: ORF4 polyprotein (931 aa).

Proteolytic processing of ORF4 polyprotein yields the VP4a, VP4b and VP4c capsid proteins.

The protein resides in the virion. ORF4 polyprotein codes for VP4a, VP4b, and VP4c, three of the four proteins that self-assemble to form the icosahedral capsid. The capsid is made of VP3 (coded by ORF3), VP4a, VP4b and VP4c. The chain is ORF4 polyprotein from Drosophila melanogaster (Fruit fly).